The following is a 430-amino-acid chain: Flavin-dependent monooxygenase eupH (430 aa).

FAD is bound by residues 11 to 14 (AGIG), 33 to 34 (ER), Q43, R107, Y282, and D306.

It belongs to the aromatic-ring hydroxylase family. Requires FAD as cofactor.

It participates in secondary metabolite biosynthesis; terpenoid biosynthesis. Flavin-dependent monooxygenase; part of the gene cluster that mediates the biosynthesis of eupenifeldin, a bistropolone meroterpenoid that acts as an antitumor agent. The first step of eupenifeldin biosynthesis is the biosynthesis of 3-methylorcinaldehyde performed by the non-reducing polyketide synthase eupA. Oxidative dearomatization of 3-methylorcinaldehyde likely catalyzed by the FAD-dependent monooxygenase eupB is followed by oxidative ring expansion by the 2-oxoglutarate-dependent dioxygenase eupC to provide the first tropolone metabolite, tropolone stipitaldehyde. In parallel, generation of sesquiterpene alpha-humulene from farnesylpyrophosphate (FPP) is catalyzed by the terpene cyclase eupE. The cytochrome P450 monooxygenase eupD then hydroxylates humulene to humulenol. The putative Diels-Alderase eupF probably catalyzes the formation of the tropolone-humulene skeleton by linking humulenol and the polyketide moiety. The short-chain dehydrogenase/reductase eupG and the flavin-dependent monooxygenase eupH are also essential for eupenifeldin biosynthesis and are likely the additional decorating enzymes of the tropolone-humulene skeleton to produce final eupenifeldin or derivatives. This is Flavin-dependent monooxygenase eupH from Phoma sp.